The sequence spans 21 residues: Conchiolin protein p20 (21 aa).

Low complexity predominate over residues 1 to 14 (YQRXSRYYYYXGPP). The segment at 1–21 (YQRXSRYYYYXGPPDDIDDRY) is disordered.

Belongs to the N16 matrix protein family. As to quaternary structure, homooligomer; disulfide-linked. May also be disulfide-linked to insoluble organic matrix. According to PubMed:11250534, amino acids 4 and 11 may be sulfated or phosphorylated. By similarity with the N14 matrix protein, amino-acid 4 may be a cysteine involved in a disulfide bond. As to expression, component of conchiolin, the organic matrix of nacre. Is dispersed in calcium carbonate and also linked by disulfide bonds to the organic core of nacre.

Its subcellular location is the secreted. The protein resides in the extracellular space. The protein localises to the extracellular matrix. Its function is as follows. May be specifically involved in the formation of the nacreous layer. The chain is Conchiolin protein p20 from Pinctada maxima (Silver-lipped pearl oyster).